We begin with the raw amino-acid sequence, 310 residues long: MYAYSHKNILDTLQFSKDDLNYLITKTNRMNALHESGKAFGILHGKLLASLFFEASTRTRMSFEAAMERLGGRLISTVGFQFSSISKGETLYDTMKMIEAYCDIAVIRHPVEGSSRIAAGAVNIPVINAGDGAGQHPTQALLDLYTIVSEKGKIDGLNIAFIGDLKYGRTIHSLINLLRHYPVHLYLISPEELRLPEKYKKNLEGFPMTWEETTDIKAIWDADVAYVTRIQEERFPDHREYEKLKDIYKVNKELVLASKKDTTILHPLPRVNELSTDVDDLPNAAYFRQAKYGVVVRMALLCLSLGVNFD.

2 residues coordinate carbamoyl phosphate: R58 and T59. Position 87 (K87) interacts with L-aspartate. R108, H136, and Q139 together coordinate carbamoyl phosphate. L-aspartate-binding residues include R169 and R229. Carbamoyl phosphate is bound by residues L268 and P269.

It belongs to the aspartate/ornithine carbamoyltransferase superfamily. ATCase family. Heterododecamer (2C3:3R2) of six catalytic PyrB chains organized as two trimers (C3), and six regulatory PyrI chains organized as three dimers (R2).

The enzyme catalyses carbamoyl phosphate + L-aspartate = N-carbamoyl-L-aspartate + phosphate + H(+). Its pathway is pyrimidine metabolism; UMP biosynthesis via de novo pathway; (S)-dihydroorotate from bicarbonate: step 2/3. In terms of biological role, catalyzes the condensation of carbamoyl phosphate and aspartate to form carbamoyl aspartate and inorganic phosphate, the committed step in the de novo pyrimidine nucleotide biosynthesis pathway. The chain is Aspartate carbamoyltransferase catalytic subunit from Leptospira biflexa serovar Patoc (strain Patoc 1 / Ames).